The following is a 487-amino-acid chain: MDLYKLTVHELQDKLLAGEISSEDIVKSLFSRIALVEEKAQAFITLCEETALEGARRIDQQDEYGGIKGIPYGLKDLFCTRGIKTTCASRMLENFVPSYESTASKLLNEKGGILLGKLNLDEFAMGSSTEQSAFFPSRNPWDWERVPGGSSGGCAAAVAAGEIPFALASDTGGSIRQPASYCGIVGLKPTYGRVSRWGVAAFASSLDQVGILSRDVRDCALILKIIAGKDPLDATSADTEVPNYCAFLDGEVKGMRIAYPREYFQHWVTESIRTAVMKALRKFEELGAIVEEVSLPHSEYALPAYYIVAPAEASTNLARFDGVRYGLRDDEADNVIDMFSLSRAQGFGPEVKRRIMLGTYALSSGYYDAYYLKAMKVRRLIASDFAKVFRDFDLIVSPTTPTTAFKLGEQIDDTLTLYMNDALTVPVNMAGLPGISIPCALDDGLPVGMQLIGRAFDEATLLKAAYAFEQNTDYHRLTPVPGGGINE.

Residues Lys-75 and Ser-150 each act as charge relay system in the active site. Ser-174 serves as the catalytic Acyl-ester intermediate.

The protein belongs to the amidase family. GatA subfamily. As to quaternary structure, heterotrimer of A, B and C subunits.

It catalyses the reaction L-glutamyl-tRNA(Gln) + L-glutamine + ATP + H2O = L-glutaminyl-tRNA(Gln) + L-glutamate + ADP + phosphate + H(+). Allows the formation of correctly charged Gln-tRNA(Gln) through the transamidation of misacylated Glu-tRNA(Gln) in organisms which lack glutaminyl-tRNA synthetase. The reaction takes place in the presence of glutamine and ATP through an activated gamma-phospho-Glu-tRNA(Gln). The chain is Glutamyl-tRNA(Gln) amidotransferase subunit A from Syntrophomonas wolfei subsp. wolfei (strain DSM 2245B / Goettingen).